Consider the following 857-residue polypeptide: Cation/H(+) antiporter 25 (857 aa).

The next 11 helical transmembrane spans lie at 65–85 (FSTF…VYVL), 93–110 (RIVC…SMLG), 122–142 (PIAN…FFFL), 161–181 (YIAA…GAAL), 194–214 (SIGG…YTVL), 227–247 (FAMS…VLFE), 259–279 (YSVI…LLVV), 313–333 (FLTD…GLVV), 385–405 (IYMS…AALF), 413–435 (SLTL…LHWI), and 447–467 (VMVL…SFLY). Phosphoserine is present on Ser-855.

It belongs to the monovalent cation:proton antiporter 2 (CPA2) transporter (TC 2.A.37) family. CHX (TC 2.A.37.4) subfamily. Specifically expressed in pollen.

The protein resides in the membrane. Functionally, may operate as a cation/H(+) antiporter. The polypeptide is Cation/H(+) antiporter 25 (CHX25) (Arabidopsis thaliana (Mouse-ear cress)).